The chain runs to 283 residues: ATP phosphoribosyltransferase (283 aa).

This sequence belongs to the ATP phosphoribosyltransferase family. Long subfamily. The cofactor is Mg(2+).

It localises to the cytoplasm. The catalysed reaction is 1-(5-phospho-beta-D-ribosyl)-ATP + diphosphate = 5-phospho-alpha-D-ribose 1-diphosphate + ATP. The protein operates within amino-acid biosynthesis; L-histidine biosynthesis; L-histidine from 5-phospho-alpha-D-ribose 1-diphosphate: step 1/9. Feedback inhibited by histidine. Its function is as follows. Catalyzes the condensation of ATP and 5-phosphoribose 1-diphosphate to form N'-(5'-phosphoribosyl)-ATP (PR-ATP). Has a crucial role in the pathway because the rate of histidine biosynthesis seems to be controlled primarily by regulation of HisG enzymatic activity. The sequence is that of ATP phosphoribosyltransferase from Ignicoccus hospitalis (strain KIN4/I / DSM 18386 / JCM 14125).